The chain runs to 210 residues: Beta-crystallin A4 (210 aa).

The N-terminal arm stretch occupies residues 1–25; the sequence is MSGMFSGSISETSGMSLQCTKSAGH. 2 Beta/gamma crystallin 'Greek key' domains span residues 26-65 and 66-112; these read WKIV…KVLS and GAWV…RPVA. The connecting peptide stretch occupies residues 113–118; the sequence is CANHRD. Beta/gamma crystallin 'Greek key' domains are found at residues 119–160 and 161–209; these read SRLT…HVHS and GAWV…RRIQ.

Belongs to the beta/gamma-crystallin family. As to quaternary structure, homo/heterodimer, or complexes of higher-order. The structure of beta-crystallin oligomers seems to be stabilized through interactions between the N-terminal arms.

Functionally, crystallins are the dominant structural components of the vertebrate eye lens. The chain is Beta-crystallin A4 (CRYBA4) from Bos taurus (Bovine).